Consider the following 325-residue polypeptide: MTMDDLDLRLLDGFQRDLPLEPRPFAAMATRLGTGEAEVIARLVRLRDEGIVSRIGATCRPNTAGASTLAALRVPAPRVDEIAALVGAEPGVNHSYLREGDWNLWFVATAPDTAALAESLVRIEAATGLAVLSLPLVRAFNIDLGFPLIGPRRAMALDRPADLDALRPRDKALMQALSSGLALVPRPFVALGQALHRSEAEVISRIRALAEARILTRVGVIVKHRALGWTQNAMVVWRLPEAAVEAAGTALAGVPGVTLCYQRRCVPGLWDWPLFCMIHARSHAEAMEVLAEARALPELQEVPHRILFSTRCFRQRGATIAEVAA.

It belongs to the Ahb/Nir family. Forms a complex composed of NirDL, NirG and NirH. All proteins are required for the total conversion of siroheme to didecarboxysiroheme.

The catalysed reaction is siroheme + 2 H(+) = 12,18-didecarboxysiroheme + 2 CO2. It functions in the pathway porphyrin-containing compound metabolism. Its function is as follows. Involved in heme d1 biosynthesis. Catalyzes the decarboxylation of siroheme into didecarboxysiroheme. The chain is Siroheme decarboxylase NirDL subunit from Paracoccus denitrificans (strain Pd 1222).